The chain runs to 154 residues: Snaclec agglucetin subunit alpha-1 (154 aa).

The signal sequence occupies residues 1–23 (MGRFIFVSFGLLVVFLSLSGTGA). Intrachain disulfides connect cysteine 27–cysteine 38, cysteine 55–cysteine 150, and cysteine 125–cysteine 142. The 118-residue stretch at 34 to 151 (YDQSCYRVFK…CGSEYAFVCK (118 aa)) folds into the C-type lectin domain. Residue asparagine 116 is glycosylated (N-linked (GlcNAc...) asparagine).

The protein belongs to the snaclec family. As to quaternary structure, heterotetramer of the subunits alpha-1, alpha-2, beta-1 and beta-2; disulfide-linked. In terms of tissue distribution, expressed by the venom gland.

Its subcellular location is the secreted. Agglucetin specifically causes platelet aggregation and surface exposure of integrin alpha-IIb/beta-3 with a GPIb-(GP1BA-) dependent manner in washed platelets. It binds to human platelets in a saturable manner, and its binding is specifically blocked by anti-GP Ib mAb. It regulates endothelial cell survival and promotes angiogenesis by activating integrin alpha-v/beta-3 signaling through FAK/phosphatidylinositol 3-kinase (PI3K)/Akt pathway. This Deinagkistrodon acutus (Hundred-pace snake) protein is Snaclec agglucetin subunit alpha-1.